A 466-amino-acid chain; its full sequence is Asparagine--tRNA ligase (466 aa).

This sequence belongs to the class-II aminoacyl-tRNA synthetase family. In terms of assembly, homodimer.

The protein localises to the cytoplasm. The catalysed reaction is tRNA(Asn) + L-asparagine + ATP = L-asparaginyl-tRNA(Asn) + AMP + diphosphate + H(+). The protein is Asparagine--tRNA ligase of Shewanella oneidensis (strain ATCC 700550 / JCM 31522 / CIP 106686 / LMG 19005 / NCIMB 14063 / MR-1).